The primary structure comprises 215 residues: Pyrrolidone-carboxylate peptidase (215 aa).

Active-site residues include Glu80, Cys143, and His167.

It belongs to the peptidase C15 family. Homotetramer.

The protein localises to the cytoplasm. The catalysed reaction is Release of an N-terminal pyroglutamyl group from a polypeptide, the second amino acid generally not being Pro.. Functionally, removes 5-oxoproline from various penultimate amino acid residues except L-proline. The chain is Pyrrolidone-carboxylate peptidase from Brevibacillus brevis (strain 47 / JCM 6285 / NBRC 100599).